A 235-amino-acid chain; its full sequence is UPF0714 protein YmaC (235 aa).

Residues 5–24 (LLNVILVLAIVLFLRYVHYS) form a helical membrane-spanning segment.

The protein belongs to the UPF0714 family.

The protein resides in the cell membrane. In Bacillus subtilis (strain 168), this protein is UPF0714 protein YmaC (ymaC).